Here is a 218-residue protein sequence, read N- to C-terminus: UPF0502 protein VS_II0353 (218 aa).

This sequence belongs to the UPF0502 family.

This chain is UPF0502 protein VS_II0353, found in Vibrio atlanticus (strain LGP32) (Vibrio splendidus (strain Mel32)).